The following is a 572-amino-acid chain: MKTSLQIAAEAHLEPIGVIAERLGLPTEYLEPYGRYRGKIDLTFLDDHANRPRGRYILVSAITPTPLGEGKTTTAIGLAMALNRIGKRAVVTLRQSSLGPVFGIKGGGAGGGYSQIVPLAESILHLNGDIHAVSQAHNQLAALTDNSWYHGNPLDIDPDRIEIRRVVDVNDRFLRQVMIGLGGKQNGFPRQTGFDISVASELMAILAMVSGAGAKAALRELRARIGRMVVAFRRDGTPVTAEDVRGAGAATVLMREALKPNLMQTIENTPALIHAGPFANIAQGNSSILADLVALRCAEYTITEAGFGADIGAEKFFNLKCRAGGLWPDAAVIVATVRALKAHSGKYEIVAGKPLPVALLQENPDDVFAGGDNLRRQIANITQFGVPVVVALNTYPEDTATEIEAVAQIATAAGAVGMAVSNVYAAGGAGGVELAKLVARVTERPGPREPKYLYPLEMPLAEKIEVIARRIYGAAGIELSATAAAQLATLTEAGFGNLPICMVKTHLSLSHDPKLRGAPAGFIFPIREVRISAGAGFILPIAGTTVTMPGLGAHPAAHQVDIDDDGNIVGLF.

Position 65-72 (65-72) interacts with ATP; that stretch reads TPLGEGKT.

The protein belongs to the formate--tetrahydrofolate ligase family.

It catalyses the reaction (6S)-5,6,7,8-tetrahydrofolate + formate + ATP = (6R)-10-formyltetrahydrofolate + ADP + phosphate. It participates in one-carbon metabolism; tetrahydrofolate interconversion. This chain is Formate--tetrahydrofolate ligase, found in Chloroflexus aggregans (strain MD-66 / DSM 9485).